Consider the following 334-residue polypeptide: D-fructose 1,6-bisphosphatase class 2/sedoheptulose 1,7-bisphosphatase (334 aa).

4 residues coordinate Mn(2+): D33, E57, D85, and E88. Substrate contacts are provided by residues 88–90, Y119, 164–166, and 186–188; these read EGT, RAR, and DGD. E213 is a binding site for Mn(2+).

It belongs to the FBPase class 2 family. As to quaternary structure, homotetramer. Mn(2+) serves as cofactor.

The catalysed reaction is beta-D-fructose 1,6-bisphosphate + H2O = beta-D-fructose 6-phosphate + phosphate. It carries out the reaction D-sedoheptulose 1,7-bisphosphate + H2O = D-sedoheptulose 7-phosphate + phosphate. Its pathway is carbohydrate biosynthesis; Calvin cycle. Catalyzes the hydrolysis of fructose 1,6-bisphosphate (Fru 1,6-P2) and sedoheptulose 1,7-bisphosphate (Sed 1,7-P2) to fructose 6-phosphate and sedoheptulose 7-phosphate, respectively. The protein is D-fructose 1,6-bisphosphatase class 2/sedoheptulose 1,7-bisphosphatase of Synechococcus sp. (strain CC9311).